Consider the following 81-residue polypeptide: Acyl carrier protein (81 aa).

The Carrier domain occupies 1–79 (MDVAAMQVKI…DIFDYLAKNK (79 aa)). O-(pantetheine 4'-phosphoryl)serine is present on S39.

This sequence belongs to the acyl carrier protein (ACP) family. In terms of processing, 4'-phosphopantetheine is transferred from CoA to a specific serine of apo-ACP by AcpS. This modification is essential for activity because fatty acids are bound in thioester linkage to the sulfhydryl of the prosthetic group.

The protein resides in the cytoplasm. It participates in lipid metabolism; fatty acid biosynthesis. Its function is as follows. Carrier of the growing fatty acid chain in fatty acid biosynthesis. The protein is Acyl carrier protein of Syntrophobacter fumaroxidans (strain DSM 10017 / MPOB).